The sequence spans 78 residues: Vacuolar ATPase assembly integral membrane protein VMA21 (78 aa).

Over 1–14 the chain is Cytoplasmic; the sequence is MPADIPKSVVQKLV. The helical transmembrane segment at 15–35 threads the bilayer; that stretch reads FFTAAMIICPVATFFICQYLF. Topologically, residues 36-38 are lumenal; it reads SNN. Residues 39 to 59 form a helical membrane-spanning segment; the sequence is AIISGGVSALVANIVLIGYVV. Residues 60–78 lie on the Cytoplasmic side of the membrane; it reads AAFMEDTTEQEPEETKKSR. Residues 75-78 carry the Prevents secretion from ER motif; sequence KKSR.

This sequence belongs to the VMA21 family.

Its subcellular location is the endoplasmic reticulum membrane. It localises to the endoplasmic reticulum-Golgi intermediate compartment membrane. The protein localises to the cytoplasmic vesicle. It is found in the COPII-coated vesicle membrane. Required for the assembly of the V0 complex of the vacuolar ATPase (V-ATPase) in the endoplasmic reticulum. This chain is Vacuolar ATPase assembly integral membrane protein VMA21, found in Debaryomyces hansenii (strain ATCC 36239 / CBS 767 / BCRC 21394 / JCM 1990 / NBRC 0083 / IGC 2968) (Yeast).